Consider the following 37-residue polypeptide: Large ribosomal subunit protein bL36 (37 aa).

This sequence belongs to the bacterial ribosomal protein bL36 family.

The protein is Large ribosomal subunit protein bL36 of Nostoc punctiforme (strain ATCC 29133 / PCC 73102).